The chain runs to 189 residues: Mu-like prophage FluMu protein gp27 (189 aa).

It to phage Mu protein gp27.

The sequence is that of Mu-like prophage FluMu protein gp27 from Haemophilus influenzae (strain ATCC 51907 / DSM 11121 / KW20 / Rd).